The sequence spans 387 residues: Chorismate synthase (387 aa).

Residues Arg40 and Arg46 each coordinate NADP(+). FMN is bound by residues 129–131 (RSS), 250–251 (QA), Gly295, 310–314 (KPIPT), and Arg336.

This sequence belongs to the chorismate synthase family. In terms of assembly, homotetramer. The cofactor is FMNH2.

The enzyme catalyses 5-O-(1-carboxyvinyl)-3-phosphoshikimate = chorismate + phosphate. The protein operates within metabolic intermediate biosynthesis; chorismate biosynthesis; chorismate from D-erythrose 4-phosphate and phosphoenolpyruvate: step 7/7. Its function is as follows. Catalyzes the anti-1,4-elimination of the C-3 phosphate and the C-6 proR hydrogen from 5-enolpyruvylshikimate-3-phosphate (EPSP) to yield chorismate, which is the branch point compound that serves as the starting substrate for the three terminal pathways of aromatic amino acid biosynthesis. This reaction introduces a second double bond into the aromatic ring system. This Desulforamulus reducens (strain ATCC BAA-1160 / DSM 100696 / MI-1) (Desulfotomaculum reducens) protein is Chorismate synthase.